A 214-amino-acid chain; its full sequence is Phosphatidylserine decarboxylase proenzyme (214 aa).

Ser182 acts as the Schiff-base intermediate with substrate; via pyruvic acid in catalysis. Ser182 is modified (pyruvic acid (Ser); by autocatalysis).

It belongs to the phosphatidylserine decarboxylase family. PSD-A subfamily. As to quaternary structure, heterodimer of a large membrane-associated beta subunit and a small pyruvoyl-containing alpha subunit. It depends on pyruvate as a cofactor. In terms of processing, is synthesized initially as an inactive proenzyme. Formation of the active enzyme involves a self-maturation process in which the active site pyruvoyl group is generated from an internal serine residue via an autocatalytic post-translational modification. Two non-identical subunits are generated from the proenzyme in this reaction, and the pyruvate is formed at the N-terminus of the alpha chain, which is derived from the carboxyl end of the proenzyme. The post-translation cleavage follows an unusual pathway, termed non-hydrolytic serinolysis, in which the side chain hydroxyl group of the serine supplies its oxygen atom to form the C-terminus of the beta chain, while the remainder of the serine residue undergoes an oxidative deamination to produce ammonia and the pyruvoyl prosthetic group on the alpha chain.

The protein localises to the cell membrane. It catalyses the reaction a 1,2-diacyl-sn-glycero-3-phospho-L-serine + H(+) = a 1,2-diacyl-sn-glycero-3-phosphoethanolamine + CO2. Its pathway is phospholipid metabolism; phosphatidylethanolamine biosynthesis; phosphatidylethanolamine from CDP-diacylglycerol: step 2/2. Catalyzes the formation of phosphatidylethanolamine (PtdEtn) from phosphatidylserine (PtdSer). This chain is Phosphatidylserine decarboxylase proenzyme, found in Burkholderia cenocepacia (strain ATCC BAA-245 / DSM 16553 / LMG 16656 / NCTC 13227 / J2315 / CF5610) (Burkholderia cepacia (strain J2315)).